The sequence spans 192 residues: DNA dC-&gt;dU-editing enzyme APOBEC-3Ca (192 aa).

The region spanning Ile-15 to Leu-141 is the CMP/dCMP-type deaminase domain. His-69 is a binding site for Zn(2+). Glu-71 acts as the Proton donor in catalysis. 2 residues coordinate Zn(2+): Cys-100 and Cys-103.

This sequence belongs to the cytidine and deoxycytidylate deaminase family. (Microbial infection) Interacts with feline foamy virus protein Bet. This interaction does not induce APOBEC3Ca degradation but prevents its dimerization and incorporation into the virion. Zn(2+) serves as cofactor.

The protein resides in the nucleus. The protein localises to the cytoplasm. The catalysed reaction is a 2'-deoxycytidine in single-stranded DNA + H2O + H(+) = a 2'-deoxyuridine in single-stranded DNA + NH4(+). In terms of biological role, DNA deaminase (cytidine deaminase) which acts as an inhibitor of retrovirus replication and retrotransposon mobility via deaminase-dependent and -independent mechanisms. Selectively targets single-stranded DNA and does not deaminate double-stranded DNA or single- or double-stranded RNA. Does not reduce infectivity of foamy feline virus, feline immunodeficiency virus or feline leukemia virus. In Felis catus (Cat), this protein is DNA dC-&gt;dU-editing enzyme APOBEC-3Ca.